A 217-amino-acid polypeptide reads, in one-letter code: U exon protein (217 aa).

2 disordered regions span residues 79-113 and 171-217; these read ISGEGNGQSGRGAARNHPRARTRCGATSPNHGGRV and KEAP…WQRR. The segment covering 188–197 has biased composition (basic residues); that stretch reads RGQRGRKRRC. Residues 202–217 are compositionally biased toward polar residues; sequence GGFQQPTGANQAWQRR.

The protein belongs to the adenoviridae U exon protein family.

Its subcellular location is the host nucleus. The protein resides in the host nucleoplasm. The protein localises to the host nucleolus. Might play a role in viral replication since it is associated with viral replication centers. Seems to have an effect on DBP localization. This is U exon protein from Human adenovirus C serotype 5 (HAdV-5).